A 120-amino-acid chain; its full sequence is MQRIMLRAKLHRVTVTQADLNYEGSCGIDQDLLDAADMKEFEKIELYNVNNGERFSTYIIKGERGSGEISLNGAAARRAHLGDQLIICTYAPMSDEEIAAYKPKVILVNEKNGIKEIKKF.

The active-site Schiff-base intermediate with substrate; via pyruvic acid is the S25. The residue at position 25 (S25) is a Pyruvic acid (Ser). A substrate-binding site is contributed by T57. Residue Y58 is the Proton donor of the active site. 73–75 contributes to the substrate binding site; sequence GAA.

Belongs to the PanD family. As to quaternary structure, heterooctamer of four alpha and four beta subunits. Requires pyruvate as cofactor. Post-translationally, is synthesized initially as an inactive proenzyme, which is activated by self-cleavage at a specific serine bond to produce a beta-subunit with a hydroxyl group at its C-terminus and an alpha-subunit with a pyruvoyl group at its N-terminus.

It is found in the cytoplasm. The catalysed reaction is L-aspartate + H(+) = beta-alanine + CO2. It participates in cofactor biosynthesis; (R)-pantothenate biosynthesis; beta-alanine from L-aspartate: step 1/1. Its function is as follows. Catalyzes the pyruvoyl-dependent decarboxylation of aspartate to produce beta-alanine. The polypeptide is Aspartate 1-decarboxylase (Cupriavidus necator (strain ATCC 17699 / DSM 428 / KCTC 22496 / NCIMB 10442 / H16 / Stanier 337) (Ralstonia eutropha)).